Here is a 652-residue protein sequence, read N- to C-terminus: p-hydroxybenzoic acid efflux pump subunit AaeB (652 aa).

A run of 11 helical transmembrane segments spans residues 8–28, 34–54, 64–84, 88–108, 118–138, 149–169, 367–387, 404–424, 429–449, 453–473, and 480–500; these read FPIK…HFNL, AVMT…GDPF, LRII…IATI, ALMM…SSLI, LAGY…SVLL, EIII…PRSV, LFWL…LAVI, FLYG…VIMP, SMLL…ILIQ, IGTL…NPMT, and LDNA…ILLI.

The protein belongs to the aromatic acid exporter ArAE (TC 2.A.85) family.

It localises to the cell inner membrane. In terms of biological role, forms an efflux pump with AaeA. Could function as a metabolic relief valve, allowing to eliminate certain compounds when they accumulate to high levels in the cell. This is p-hydroxybenzoic acid efflux pump subunit AaeB from Erwinia billingiae (strain Eb661).